Consider the following 490-residue polypeptide: Glutamate--tRNA ligase 2 (490 aa).

The short motif at 33-43 (PSPTGYLHIGG) is the 'HIGH' region element. The short motif at 262 to 266 (KLSKR) is the 'KMSKS' region element. Lysine 265 contributes to the ATP binding site.

The protein belongs to the class-I aminoacyl-tRNA synthetase family. Glutamate--tRNA ligase type 1 subfamily. As to quaternary structure, monomer.

The protein localises to the cytoplasm. The enzyme catalyses tRNA(Glu) + L-glutamate + ATP = L-glutamyl-tRNA(Glu) + AMP + diphosphate. Catalyzes the attachment of glutamate to tRNA(Glu) in a two-step reaction: glutamate is first activated by ATP to form Glu-AMP and then transferred to the acceptor end of tRNA(Glu). The polypeptide is Glutamate--tRNA ligase 2 (Parvibaculum lavamentivorans (strain DS-1 / DSM 13023 / NCIMB 13966)).